Here is a 105-residue protein sequence, read N- to C-terminus: Flagellar transcriptional regulator FlhD (105 aa).

This sequence belongs to the FlhD family. As to quaternary structure, homodimer; disulfide-linked. Forms a heterohexamer composed of two FlhC and four FlhD subunits. Each FlhC binds a FlhD dimer, forming a heterotrimer, and a hexamer assembles by dimerization of two heterotrimers.

It localises to the cytoplasm. Functionally, functions in complex with FlhC as a master transcriptional regulator that regulates transcription of several flagellar and non-flagellar operons by binding to their promoter region. Activates expression of class 2 flagellar genes, including fliA, which is a flagellum-specific sigma factor that turns on the class 3 genes. Also regulates genes whose products function in a variety of physiological pathways. This is Flagellar transcriptional regulator FlhD from Nitrosomonas eutropha (strain DSM 101675 / C91 / Nm57).